The primary structure comprises 146 residues: Minor capsid protein P5 (146 aa).

Interacts with the major capsid protein.

The protein localises to the virion. One of the minor capsid proteins that constitute a network internal to the major capsid proteins and outside the lipid membrane. The minor capsid proteins glue and stabilize the capsomers. The sequence is that of Minor capsid protein P5 from Paramecium bursaria Chlorella virus 1 (PBCV-1).